Consider the following 809-residue polypeptide: Valine--tRNA ligase (809 aa).

The short motif at 60–70 is the 'HIGH' region element; that stretch reads PFTSGELHMGH. Residues 546-550 carry the 'KMSKS' region motif; that stretch reads RMSKS. Lysine 549 lines the ATP pocket.

This sequence belongs to the class-I aminoacyl-tRNA synthetase family. ValS type 2 subfamily.

The protein resides in the cytoplasm. The catalysed reaction is tRNA(Val) + L-valine + ATP = L-valyl-tRNA(Val) + AMP + diphosphate. In terms of biological role, catalyzes the attachment of valine to tRNA(Val). As ValRS can inadvertently accommodate and process structurally similar amino acids such as threonine, to avoid such errors, it has a 'posttransfer' editing activity that hydrolyzes mischarged Thr-tRNA(Val) in a tRNA-dependent manner. The chain is Valine--tRNA ligase from Sulfurisphaera tokodaii (strain DSM 16993 / JCM 10545 / NBRC 100140 / 7) (Sulfolobus tokodaii).